Consider the following 495-residue polypeptide: UDP-N-acetylmuramoyl-L-alanyl-D-glutamate--2,6-diaminopimelate ligase (495 aa).

Serine 29 contributes to the UDP-N-acetyl-alpha-D-muramoyl-L-alanyl-D-glutamate binding site. Glycine 111 to serine 117 serves as a coordination point for ATP. Residues threonine 153 to threonine 154, serine 180, glutamine 186, and arginine 188 contribute to the UDP-N-acetyl-alpha-D-muramoyl-L-alanyl-D-glutamate site. Lysine 220 carries the N6-carboxylysine modification. Residues arginine 384, aspartate 408 to arginine 411, glycine 459, and glutamate 463 each bind meso-2,6-diaminopimelate. Residues aspartate 408–arginine 411 carry the Meso-diaminopimelate recognition motif motif.

Belongs to the MurCDEF family. MurE subfamily. Mg(2+) serves as cofactor. Post-translationally, carboxylation is probably crucial for Mg(2+) binding and, consequently, for the gamma-phosphate positioning of ATP.

It is found in the cytoplasm. The catalysed reaction is UDP-N-acetyl-alpha-D-muramoyl-L-alanyl-D-glutamate + meso-2,6-diaminopimelate + ATP = UDP-N-acetyl-alpha-D-muramoyl-L-alanyl-gamma-D-glutamyl-meso-2,6-diaminopimelate + ADP + phosphate + H(+). Its pathway is cell wall biogenesis; peptidoglycan biosynthesis. Catalyzes the addition of meso-diaminopimelic acid to the nucleotide precursor UDP-N-acetylmuramoyl-L-alanyl-D-glutamate (UMAG) in the biosynthesis of bacterial cell-wall peptidoglycan. This is UDP-N-acetylmuramoyl-L-alanyl-D-glutamate--2,6-diaminopimelate ligase from Xylella fastidiosa (strain 9a5c).